The following is a 96-amino-acid chain: Defensin-like protein 151 (96 aa).

An N-terminal signal peptide occupies residues 1 to 29; sequence MKKPSQLSATILTIFVILAIGVMVKETLG. Intrachain disulfides connect Cys-35–Cys-88, Cys-48–Cys-68, Cys-53–Cys-82, and Cys-57–Cys-84.

It belongs to the DEFL family.

It is found in the secreted. In Arabidopsis thaliana (Mouse-ear cress), this protein is Defensin-like protein 151 (LCR17).